The primary structure comprises 2774 residues: Teneurin-2 (2774 aa).

The 375-residue stretch at 1–375 (MDVKDRRHRS…KPSKYCSWKC (375 aa)) folds into the Teneurin N-terminal domain. Over 1-379 (MDVKDRRHRS…YCSWKCAALS (379 aa)) the chain is Cytoplasmic. A phosphoserine mark is found at Ser-90 and Ser-124. The tract at residues 111-271 (TGSDADSDTE…HHHSSANSLN (161 aa)) is disordered. Polar residues predominate over residues 141 to 155 (SSGLSSRENSALTLT). Thr-155 is subject to Phosphothreonine. Ser-157 carries the phosphoserine modification. A compositionally biased stretch (basic and acidic residues) spans 159 to 168 (NENKSDDDNG). Positions 174–188 (TSSSSLLPSAQLPSS) are enriched in low complexity. The segment covering 202 to 211 (DSNTSHQIMD) has biased composition (polar residues). A compositionally biased stretch (low complexity) spans 229-240 (SGPQQASSSGPP). A helical transmembrane segment spans residues 380–400 (AIAAALLLAILLAYFIAMHLL). Residues 401 to 2774 (GLNWQLQPAD…FLRQNEMGKR (2374 aa)) lie on the Extracellular side of the membrane. N-linked (GlcNAc...) asparagine glycosylation is found at Asn-443 and Asn-482. 8 consecutive EGF-like domains span residues 575 to 603 (DCPR…ADCA), 605 to 634 (AACP…AECD), 636 to 668 (PMNQ…EHCE), 669 to 701 (EVDC…NCEL), 702 to 735 (ARVQ…PDCS), 738 to 766 (VCSV…AACD), 769 to 797 (VCHP…EHCT), and 808 to 841 (DGCP…PGCN). Disulfide bonds link Cys-576/Cys-586, Cys-580/Cys-591, Cys-593/Cys-602, Cys-611/Cys-622, Cys-624/Cys-633, Cys-640/Cys-651, Cys-645/Cys-656, Cys-658/Cys-667, Cys-672/Cys-683, Cys-677/Cys-688, Cys-690/Cys-699, Cys-710/Cys-723, Cys-725/Cys-734, Cys-739/Cys-749, Cys-743/Cys-754, Cys-756/Cys-765, Cys-770/Cys-780, Cys-774/Cys-785, Cys-787/Cys-796, Cys-810/Cys-820, Cys-814/Cys-829, and Cys-831/Cys-840. Asn-925, Asn-948, and Asn-1267 each carry an N-linked (GlcNAc...) asparagine glycan. 5 NHL repeats span residues 1272 to 1316 (LELR…VKSL), 1342 to 1386 (ARCG…NGII), 1401 to 1452 (LSCD…IAGR), 1474 to 1501 (LESA…INRL), and 1530 to 1573 (CYSG…VSKN). The YD 1 repeat unit spans residues 1583–1602 (YEAASPGEQELYVFNADGIH). N-linked (GlcNAc...) asparagine glycosylation occurs at Asn-1616. YD repeat units follow at residues 1619 to 1639 (YSAD…LKIR), 1682 to 1701 (YDGN…WTTF), and 1702 to 1724 (YDYD…TSLH). 5 N-linked (GlcNAc...) asparagine glycosylation sites follow: Asn-1712, Asn-1749, Asn-1773, Asn-1807, and Asn-1892. YD repeat units follow at residues 1895–1914 (YFFN…ERTD), 1936–1954 (YLDK…YIFE), 1955–1975 (YDSS…HSMS), 1982–1999 (YIRN…VIFD), 2000–2021 (YSDD…VFYK), 2022–2039 (YGKL…TAVT), 2042–2062 (YDET…FSCT), 2065–2085 (YRKV…EGMI), 2093–2113 (YHDN…TPLP), 2119–2136 (YDEI…GVIY), 2137–2163 (YDIN…IKEV), 2165–2178 (YEMF…MTVQ), 2179–2202 (YDSM…TKYT), 2205–2225 (YDGD…WRYS), 2226–2246 (YDLN…LMPL), 2248–2268 (YDLR…DDDG), 2280–2300 (YNSK…SVQY), and 2302–2322 (YDGV…LQYF). N-linked (GlcNAc...) asparagine glycosylation occurs at Asn-1993. N-linked (GlcNAc...) asparagine glycosylation occurs at Asn-2197. Asn-2337 carries an N-linked (GlcNAc...) asparagine glycan. The stretch at 2348-2389 (YDLQGHLFAMESSSGEEYYVASDNTGTPLAVFSINGLMIKQL) is one YD 23 repeat. N-linked (GlcNAc...) asparagine glycosylation is present at Asn-2648.

The protein belongs to the tenascin family. Teneurin subfamily. Homodimer; disulfide-linked. Heterodimer with either TENM1 or TENM3. May also form heterodimer with TENM4. Interacts with ADGRL1 isoform 2. Post-translationally, derives from the membrane form by proteolytic processing. Derives from the plasma membrane form by proteolytic cleavage and translocates to the nucleus. Homophilic binding of the C-terminal extracellular domain stimulates its proteolytic cleavage and release in the cytoplasmic. Is subjected to rapid degradation by the proteasome pathway. Expressed in the brain (at protein level).

It localises to the cell membrane. The protein localises to the presynaptic cell membrane. The protein resides in the postsynaptic cell membrane. It is found in the endoplasmic reticulum. Its subcellular location is the golgi apparatus. It localises to the synapse. The protein localises to the cell projection. The protein resides in the dendritic spine. It is found in the filopodium. Its subcellular location is the growth cone. It localises to the nucleus. The protein localises to the PML body. Functionally, involved in neural development, regulating the establishment of proper connectivity within the nervous system. Acts as a ligand of the ADGRL1 and ADGRL3 receptors that are expressed at the surface of adjacent cells. Promotes the formation of filopodia and enlarged growth cone in neuronal cells. Mediates axon guidance and homophilic and heterophilic cell-cell adhesion. May function as a cellular signal transducer. Its function is as follows. Induces gene transcription inhibition. This chain is Teneurin-2 (Tenm2), found in Rattus norvegicus (Rat).